Consider the following 118-residue polypeptide: Co-chaperonin GroES (118 aa).

This sequence belongs to the GroES chaperonin family. In terms of assembly, heptamer of 7 subunits arranged in a ring. Interacts with the chaperonin GroEL.

It localises to the cytoplasm. Functionally, together with the chaperonin GroEL, plays an essential role in assisting protein folding. The GroEL-GroES system forms a nano-cage that allows encapsulation of the non-native substrate proteins and provides a physical environment optimized to promote and accelerate protein folding. GroES binds to the apical surface of the GroEL ring, thereby capping the opening of the GroEL channel. The sequence is that of Co-chaperonin GroES from Helicobacter pylori (strain G27).